Here is a 316-residue protein sequence, read N- to C-terminus: Phosphate acyltransferase (316 aa).

It belongs to the PlsX family. In terms of assembly, homodimer. Probably interacts with PlsY.

Its subcellular location is the cytoplasm. The catalysed reaction is a fatty acyl-[ACP] + phosphate = an acyl phosphate + holo-[ACP]. Its pathway is lipid metabolism; phospholipid metabolism. Functionally, catalyzes the reversible formation of acyl-phosphate (acyl-PO(4)) from acyl-[acyl-carrier-protein] (acyl-ACP). This enzyme utilizes acyl-ACP as fatty acyl donor, but not acyl-CoA. This Chlamydia caviae (strain ATCC VR-813 / DSM 19441 / 03DC25 / GPIC) (Chlamydophila caviae) protein is Phosphate acyltransferase.